The chain runs to 366 residues: N-methyltransferase fsqC (366 aa).

The signal sequence occupies residues 1–18 (MSSNVQDIRGWPPPFANA). An N-linked (GlcNAc...) asparagine glycan is attached at Asn-270.

The protein belongs to the methyltransferase superfamily.

Its pathway is secondary metabolite biosynthesis. Functionally, N-methyltransferase; part of the gene cluster that mediates the biosynthesis of the isoquinoline alkaloids fumisoquin A, fumisoquin B and fumisoquin C; as well as small amounts of fumipyrrole as a shunt metabolite. The products of the cluster lead to a brown coloration and are important for growth and conidiation. The nonribosomal peptide synthetase-like protein fsqF, which lacks a canonical condensation domain, is required for addition of a serine-derived dehydroalanine moiety to activated tyrosine but is not essential for the subsequent steps leading to isoquinoline formation. A different enzyme, most likely the ATP-grasp enzyme fsqD, is responsible for activation of tyrosine. Three additional enzymes encoded by the fsq cluster, the N-methyltransferase fsqC, the phenol 2-monooxygenase fsqG and the FAD-dependent oxidase fsqB, catalyze the formation of the isoquinoline ring system in the fumisoquins. FsqB converts the fspF thiolation domain-bound (2S,4S,5S)-2-amino-6-(3,4-dihydroxyphenyl)-4-hydroxy-5-(methylamino)hexanoyl into isoquinoline. The cyclization most likely proceeds via a two-step mechanism, beginning with FAD-dependent oxidation of the methyl group to an iminium species followed by electrophilic attack on the deprotonated phenol. The polypeptide is N-methyltransferase fsqC (Aspergillus fumigatus (strain ATCC MYA-4609 / CBS 101355 / FGSC A1100 / Af293) (Neosartorya fumigata)).